The primary structure comprises 473 residues: Catalase easC (473 aa).

Residues methionine 1–serine 15 are compositionally biased toward low complexity. The disordered stretch occupies residues methionine 1–aspartate 31. Residue histidine 54 is part of the active site. Tyrosine 344 lines the heme pocket. The tract at residues aspartate 369–histidine 388 is disordered.

Belongs to the catalase family. Requires heme as cofactor.

It participates in alkaloid biosynthesis; ergot alkaloid biosynthesis. Catalase; part of the gene cluster that mediates the biosynthesis of fungal ergot alkaloid. DmaW catalyzes the first step of ergot alkaloid biosynthesis by condensing dimethylallyl diphosphate (DMAP) and tryptophan to form 4-dimethylallyl-L-tryptophan. The second step is catalyzed by the methyltransferase easF that methylates 4-dimethylallyl-L-tryptophan in the presence of S-adenosyl-L-methionine, resulting in the formation of 4-dimethylallyl-L-abrine. The catalase easC and the FAD-dependent oxidoreductase easE then transform 4-dimethylallyl-L-abrine to chanoclavine-I which is further oxidized by easD in the presence of NAD(+), resulting in the formation of chanoclavine-I aldehyde. Agroclavine dehydrogenase easG then mediates the conversion of chanoclavine-I aldehyde to agroclavine via a non-enzymatic adduct reaction: the substrate is an iminium intermediate that is formed spontaneously from chanoclavine-I aldehyde in the presence of glutathione. The presence of easA is not required to complete this reaction. Further conversion of agroclavine to paspalic acid is a two-step process involving oxidation of agroclavine to elymoclavine and of elymoclavine to paspalic acid, the second step being performed by the elymoclavine oxidase cloA. Paspalic acid is then further converted to D-lysergic acid. Ergopeptines are assembled from D-lysergic acid and three different amino acids by the D-lysergyl-peptide-synthetases composed each of a monomudular and a trimodular nonribosomal peptide synthetase subunit. LpsB and lpsC encode the monomodular subunits responsible for D-lysergic acid activation and incorporation into the ergopeptine backbone. LpsA1 and A2 subunits encode the trimodular nonribosomal peptide synthetase assembling the tripeptide portion of ergopeptines. LpsA1 is responsible for formation of the major ergopeptine, ergotamine, and lpsA2 for alpha-ergocryptine, the minor ergopeptine of the total alkaloid mixture elaborated by C.purpurea. D-lysergyl-tripeptides are assembled by the nonribosomal peptide synthetases and released as N-(D-lysergyl-aminoacyl)-lactams. Cyclolization of the D-lysergyl-tripeptides is performed by the Fe(2+)/2-ketoglutarate-dependent dioxygenase easH which introduces a hydroxyl group into N-(D-lysergyl-aminoacyl)-lactam at alpha-C of the aminoacyl residue followed by spontaneous condensation with the terminal lactam carbonyl group. The polypeptide is Catalase easC (Claviceps purpurea (Ergot fungus)).